The primary structure comprises 509 residues: Poly(A) RNA polymerase GLD2-A (509 aa).

A disordered region spans residues 88 to 107 (PGSPSSSFQNRKRRSDEGNV). Mg(2+)-binding residues include Asp-240 and Asp-242. The PAP-associated domain maps to 409–462 (LGDLLLGFLKYFAVEFDWSKDIISVREGKALPRSDDYLWRNKYICVEEPFDGTN).

The protein belongs to the DNA polymerase type-B-like family. GLD2 subfamily. In terms of assembly, component of a complex at least composed of cpeb1, cpsf1, tent2/gld2, pabpc1/ePAB, parn and sympk. Following oocyte maturation, parn is expelled from the complex. Interacts with rbfox2 and sympk. Mg(2+) is required as a cofactor. Mn(2+) serves as cofactor.

It localises to the cytoplasm. The enzyme catalyses RNA(n) + ATP = RNA(n)-3'-adenine ribonucleotide + diphosphate. Functionally, cytoplasmic poly(A) RNA polymerase that adds successive AMP monomers to the 3'-end of specific RNAs, forming a poly(A) tail. In contrast to the canonical nuclear poly(A) RNA polymerase, it only adds poly(A) to selected cytoplasmic mRNAs during oocyte maturation. Plays a central role during oocyte maturation by mediating polyadenylation of dormant mRNAs, which contain 5'AAUAAA-3' sequence in their 3'UTR. In immature oocytes, polyadenylation of poly(A) tails is counteracted by the ribonuclease parn. During maturation parn is excluded from the ribonucleoprotein complex, allowing poly(A) elongation and activation of mRNAs. May not play a role in replication-dependent histone mRNA degradation. This chain is Poly(A) RNA polymerase GLD2-A (tent2-a), found in Xenopus laevis (African clawed frog).